Consider the following 103-residue polypeptide: MYAVIKTGGKQYRVSAGQKLKVEQIPADVGAEVTLDQILMVGEGESVKIGAPFLAGATVKCTVVSHGRHDKVKIFKMRRRKHYQKRQGHRQNYTELRIDTIAA.

This sequence belongs to the bacterial ribosomal protein bL21 family. Part of the 50S ribosomal subunit. Contacts protein L20.

Functionally, this protein binds to 23S rRNA in the presence of protein L20. This chain is Large ribosomal subunit protein bL21, found in Dechloromonas aromatica (strain RCB).